The sequence spans 301 residues: tRNA pseudouridine synthase B (301 aa).

Asp-48 acts as the Nucleophile in catalysis.

Belongs to the pseudouridine synthase TruB family. Type 1 subfamily.

The enzyme catalyses uridine(55) in tRNA = pseudouridine(55) in tRNA. Responsible for synthesis of pseudouridine from uracil-55 in the psi GC loop of transfer RNAs. The sequence is that of tRNA pseudouridine synthase B from Mycobacterium ulcerans (strain Agy99).